A 526-amino-acid chain; its full sequence is Bifunctional purine biosynthesis protein PurH (526 aa).

Residues 1 to 148 form the MGS-like domain; the sequence is MQRPIIIRRA…KNYSNVVVVV (148 aa).

This sequence belongs to the PurH family.

The enzyme catalyses (6R)-10-formyltetrahydrofolate + 5-amino-1-(5-phospho-beta-D-ribosyl)imidazole-4-carboxamide = 5-formamido-1-(5-phospho-D-ribosyl)imidazole-4-carboxamide + (6S)-5,6,7,8-tetrahydrofolate. It carries out the reaction IMP + H2O = 5-formamido-1-(5-phospho-D-ribosyl)imidazole-4-carboxamide. It participates in purine metabolism; IMP biosynthesis via de novo pathway; 5-formamido-1-(5-phospho-D-ribosyl)imidazole-4-carboxamide from 5-amino-1-(5-phospho-D-ribosyl)imidazole-4-carboxamide (10-formyl THF route): step 1/1. It functions in the pathway purine metabolism; IMP biosynthesis via de novo pathway; IMP from 5-formamido-1-(5-phospho-D-ribosyl)imidazole-4-carboxamide: step 1/1. This Baumannia cicadellinicola subsp. Homalodisca coagulata protein is Bifunctional purine biosynthesis protein PurH.